The sequence spans 742 residues: G2/M phase-specific E3 ubiquitin-protein ligase (742 aa).

A C2HC pre-PHD-type zinc finger spans residues 10–50 (SPPCVLCGWTDNCPEKYGEKRTYVEYNLTLHNYCLLMSSGI). The PHD-type 1 zinc finger occupies 78–127 (LMCNICRKKGASIGCVAPKCKRSYHFPCGLQKECVFQFMEDFRSYCWEHK). The PHD-type 2; degenerate zinc finger occupies 142 to 192 (QCTICLDLVEHLPLYSVLRSPCCKNTWFHRECLQYQALSAGIFFFRCAVCN). The PHD-type 3 zinc finger occupies 236–285 (RCLCKNGRDYNKPDSKWEIKRCQSCGSRGTHLACSSIKSWEQNWECVECR). In terms of domain architecture, HECT spans 417 to 742 (KGFRQRNFRP…IRSTLRGERE (326 aa)).

The protein localises to the nucleus. Its subcellular location is the nucleolus. It is found in the cytoplasm. It carries out the reaction S-ubiquitinyl-[E2 ubiquitin-conjugating enzyme]-L-cysteine + [acceptor protein]-L-lysine = [E2 ubiquitin-conjugating enzyme]-L-cysteine + N(6)-ubiquitinyl-[acceptor protein]-L-lysine.. The protein operates within protein modification; protein ubiquitination. Its function is as follows. E3 ubiquitin-protein ligase which accepts ubiquitin from an E2 ubiquitin-conjugating enzyme in the form of a thioester and then directly transfers the ubiquitin to targeted substrates. Essential in early embryonic development to prevent apoptotic death. The chain is G2/M phase-specific E3 ubiquitin-protein ligase (G2E3) from Gallus gallus (Chicken).